The following is a 1870-amino-acid chain: Non-reducing polyketide synthase pkgA (1870 aa).

The segment at 40-279 (IQDLIRRLHR…SRHSALPISG (240 aa)) is N-terminal acylcarrier protein transacylase domain (SAT). Positions 416–838 (DAKLAVVGMA…GGNTTLLLED (423 aa)) constitute a Ketosynthase family 3 (KS3) domain. The tract at residues 453 to 492 (PPDRFDLDAHFDPSGEKENTTTKGSQSNRPLSRQAEQTDP) is disordered. Residues 455–472 (DRFDLDAHFDPSGEKENT) show a composition bias toward basic and acidic residues. Residues 473–492 (TTKGSQSNRPLSRQAEQTDP) show a composition bias toward polar residues. Catalysis depends on for beta-ketoacyl synthase activity residues Cys577, His712, and His755. The tract at residues 947–1282 (AFSGQGCLYH…QSFASLRRGD (336 aa)) is malonyl-CoA:ACP transacylase (MAT) domain. Residues 1004 to 1027 (RCPHRESTPSSDASHDSNTNRTST) form a disordered region. A compositionally biased stretch (polar residues) spans 1011–1027 (TPSSDASHDSNTNRTST). Residues 1364-1704 (TSSVQQIIFE…PRALMPVLFP (341 aa)) form a product template (PT) domain region. An N-terminal hotdog fold region spans residues 1368-1502 (QQIIFEEYDE…ATVCYEEAQD (135 aa)). Residues 1368 to 1700 (QQIIFEEYDE…FKAVPRALMP (333 aa)) form the PKS/mFAS DH domain. His1400 acts as the Proton acceptor; for dehydratase activity in catalysis. The C-terminal hotdog fold stretch occupies residues 1538 to 1700 (KGGPRVNNFF…FKAVPRALMP (163 aa)). The active-site Proton donor; for dehydratase activity is Asp1602. The region spanning 1795–1870 (QSQNAQATAC…VQDLVTWLSK (76 aa)) is the Carrier domain. Ser1832 carries the post-translational modification O-(pantetheine 4'-phosphoryl)serine.

It depends on pantetheine 4'-phosphate as a cofactor.

It carries out the reaction holo-[ACP] + 6 malonyl-CoA + acetyl-CoA + 6 H(+) = 3,5,7,9,11,13-hexaoxotetradecanoyl-[ACP] + 6 CO2 + 7 CoA. The enzyme catalyses holo-[ACP] + 5 malonyl-CoA + acetyl-CoA + 5 H(+) = 3,5,7,9,11-pentaoxododecanoyl-[ACP] + 5 CO2 + 6 CoA. It functions in the pathway secondary metabolite biosynthesis. Non-reducing polyketide synthase; part of the pkg gene cluster that mediates the biosynthesis of dihydrocitreoisocoumarin and 6,8-dihydroxy-3-(2-oxopropyl)-isocoumarin. The non-reducing polyketide synthase pkgA performs the condensation of one acetyl-CoA starter unit with 6 and 5 malonyl-CoA units, respectively. As pkgA lacks a releasing domain, the thioesterase pkgB is necessary to break the thioester bond and release dihydrocitreoisocoumarin and 6,8-dihydroxy-3-(2-oxopropyl)-isocoumarin from pkgA. The protein is Non-reducing polyketide synthase pkgA of Emericella nidulans (strain FGSC A4 / ATCC 38163 / CBS 112.46 / NRRL 194 / M139) (Aspergillus nidulans).